We begin with the raw amino-acid sequence, 66 residues long: uncharacterized protein (66 aa).

Positions 1 to 18 (MSTTSSSSTFSTRTASLS) are enriched in low complexity. Positions 1–22 (MSTTSSSSTFSTRTASLSQSYT) are disordered.

This is an uncharacterized protein from Schizosaccharomyces pombe (strain 972 / ATCC 24843) (Fission yeast).